The primary structure comprises 868 residues: Dolichyl-phosphooligosaccharide-protein glycotransferase 3 (868 aa).

Residues 1-16 (MQNAESWFKKYWHLSV) are Cytoplasmic-facing. Residues 17-36 (LVIAALISVKLRILNPWNSV) traverse the membrane as a helical segment. Over 37–101 (FTWTVRLGGN…IAGIIFSATS (65 aa)) the chain is Extracellular. The short motif at 45-47 (GND) is the DXD motif 1 element. Asp47 provides a ligand contact to Mn(2+). His81 is an a glycophospholipid binding site. A helical membrane pass occupies residues 102 to 131 (GESLRAVLAFIPAIGGVLAILPVYLLTREV). Topologically, residues 132–133 (FD) are cytoplasmic. Residues 134 to 153 (KRAAVIAAFLIAIVPGQFLQ) form a helical membrane-spanning segment. Topologically, residues 154–162 (RSILGFNDH) are extracellular. Asp161 is a binding site for Mn(2+). Residues 161 to 163 (DHH) carry the DXD motif 2 motif. His162 is a binding site for a glycophospholipid. Residue His163 participates in Mn(2+) binding. The chain crosses the membrane as a helical span at residues 163-184 (HIWEAFWQVSALGTFLLAYNRW). At 185 to 199 (KGHDLSHNLTARQMA) the chain is on the cytoplasmic side. The chain crosses the membrane as a helical span at residues 200–212 (YPVIAGITIGLYV). The Extracellular portion of the chain corresponds to 213–215 (LSW). A helical transmembrane segment spans residues 216–238 (GAGFIIAPIILAFMFFAFVLAGF). The Cytoplasmic segment spans residues 239-241 (VNA). The helical transmembrane segment at 242–262 (DRKNLSLVAVVTFAVSALIYL) threads the bilayer. The Extracellular segment spans residues 263-279 (PFAFNYPGFSTIFYSPF). Residues 280–303 (QLLVLLGSAVIAAAFYQIEKWNDV) form a helical membrane-spanning segment. Over 304 to 312 (GFFERVGLG) the chain is Cytoplasmic. The helical transmembrane segment at 313-330 (RKGMPLAVIVLTALIMGL) threads the bilayer. At 331–373 (FFVISPDFARNLLSVVRVVQPKGGALTIAEVYPFFFTHNGEFT) the chain is on the extracellular side. The TIXE motif motif lies at 357–360 (TIAE). Residues 374–396 (LTNAVLHFGALFFFGMAGILYSA) form a helical membrane-spanning segment. Residues 397-404 (YRFLKRRS) are Cytoplasmic-facing. Residues 405–423 (FPEMALLIWAIAMFIALWG) traverse the membrane as a helical segment. At 424 to 427 (QNRF) the chain is on the extracellular side. Arg426 is an a glycophospholipid binding site. Residues 428 to 452 (AYYFAAVSAVYSALALSVVFDKLHL) traverse the membrane as a helical segment. Residues 453–468 (YRALENAIGARNKLSY) are Cytoplasmic-facing. The helical transmembrane segment at 469-494 (FRVAFALLIALAAIYPTYILADAQSS) threads the bilayer. Residues 495 to 868 (YAGGPNKQWY…QNGEIIQLDL (374 aa)) are Extracellular-facing. The tract at residues 550 to 552 (WWD) is interacts with target acceptor peptide in protein substrate. A WWDYG motif motif is present at residues 550–554 (WWDYG). Residues 613-622 (EMETGKYYAM) carry the DKi motif motif.

The protein belongs to the STT3 family. The cofactor is Mg(2+). Requires Mn(2+) as cofactor. Zn(2+) is required as a cofactor.

It is found in the cell membrane. The enzyme catalyses an archaeal dolichyl phosphooligosaccharide + [protein]-L-asparagine = an archaeal dolichyl phosphate + a glycoprotein with the oligosaccharide chain attached by N-beta-D-glycosyl linkage to a protein L-asparagine.. The protein operates within protein modification; protein glycosylation. Its function is as follows. Oligosaccharyl transferase (OST) that catalyzes the initial transfer of a defined glycan (a glucose-linked heptasaccharide composed of 3 Glc, 2 Man, 2 Gal and a sulfate for A.fulgidus AglB-L) from the lipid carrier dolichol-monophosphate to an asparagine residue within an Asn-X-Ser/Thr consensus motif in nascent polypeptide chains, the first step in protein N-glycosylation. This chain is Dolichyl-phosphooligosaccharide-protein glycotransferase 3 (aglB3), found in Archaeoglobus fulgidus (strain ATCC 49558 / DSM 4304 / JCM 9628 / NBRC 100126 / VC-16).